The sequence spans 126 residues: Fluoride-specific ion channel FluC (126 aa).

4 consecutive transmembrane segments (helical) span residues 4–24 (PLLS…FLGL), 33–53 (IPLG…FAMA), 67–87 (FVIT…IEIV), and 97–117 (MAML…CLGL). Na(+) contacts are provided by Gly-74 and Thr-77.

It belongs to the fluoride channel Fluc/FEX (TC 1.A.43) family.

It is found in the cell inner membrane. The enzyme catalyses fluoride(in) = fluoride(out). Its activity is regulated as follows. Na(+) is not transported, but it plays an essential structural role and its presence is essential for fluoride channel function. In terms of biological role, fluoride-specific ion channel. Important for reducing fluoride concentration in the cell, thus reducing its toxicity. This chain is Fluoride-specific ion channel FluC, found in Acinetobacter baumannii (strain AB307-0294).